Here is a 368-residue protein sequence, read N- to C-terminus: MAVSLGDDDADELPSMLWGLDPVFSSYCRLYITDILLMKESRQVPGIYFYKTHPIFQVDVLGIVVYKREREDFYCYGVDDSTGVINCLCWKDEKWRDQGGSTTCGDASGFPRSFNIEDELKGLKEAERKSTVLEIGDLLRVRGTVKTSRDNREIKATSFYKVHDPAMAVQISRMLELPQLYRKCYDQPFKMPSDDLGSTEAGGSSHPQYLLSRAVLTLKEFLLEKEVTRFRPYDVEFLLHPLIQRSSAEQEADQPGTSFATQVGKLLKETLSFLQDEGQIFRKKRTQDEVYNVTEQDKDLHIAIKDVLREDTKREKYAEKGCHVLHILSSVRQRYSQNLSREVLEVALTFLESNSDIISTTEAHYIVL.

The tract at residues 2 to 192 is interaction with CTC1; it reads AVSLGDDDAD…KCYDQPFKMP (191 aa). The segment at residues 58 to 162 is a DNA-binding region (OB); sequence VDVLGIVVYK…EIKATSFYKV (105 aa). 2 winged helix-turn-helix (wHTH) regions span residues 201–295 and 296–368; these read AGGS…NVTE and QDKD…YIVL.

This sequence belongs to the CTC1 family. In terms of assembly, component of the CST complex.

The protein localises to the nucleus. Its subcellular location is the chromosome. The protein resides in the telomere. Functionally, component of the CST complex proposed to act as a specialized replication factor promoting DNA replication under conditions of replication stress or natural replication barriers such as the telomere duplex. The CST complex binds single-stranded DNA with high affinity in a sequence-independent manner, while isolated subunits bind DNA with low affinity by themselves. Initially the CST complex has been proposed to protect telomeres from DNA degradation. However, the CST complex has been shown to be involved in several aspects of telomere replication. This chain is CST complex subunit STN1, found in Danio rerio (Zebrafish).